The primary structure comprises 782 residues: Acetazolamide conferring resistance protein zam (782 aa).

Positions 270 to 579 constitute an RNB domain; sequence EVALSLESQA…QRLLKLVLTE (310 aa). Positions 655 to 736 constitute an S1 motif domain; the sequence is GEIFRGLITG…YRQQIDLGAV (82 aa). The tract at residues 737–782 is disordered; that stretch reads NNAPKDSANMDFDDDDEDGDEREEQDTMDWDAMEDGDDDEGGAVIF. The segment covering 747 to 782 has biased composition (acidic residues); the sequence is DFDDDDEDGDEREEQDTMDWDAMEDGDDDEGGAVIF.

It belongs to the RNR ribonuclease family.

Not known; control resistance to the carbonic anhydrase inhibitor acetazolamide. In Synechocystis sp. (strain ATCC 27184 / PCC 6803 / Kazusa), this protein is Acetazolamide conferring resistance protein zam (zam).